We begin with the raw amino-acid sequence, 323 residues long: UDP-galactose/UDP-glucose transporter 7 (323 aa).

Residues Met1–Thr10 are Cytoplasmic-facing. A helical transmembrane segment spans residues Ser11 to Ile31. The Lumenal portion of the chain corresponds to Asn32 to Val35. The helical transmembrane segment at Ile36–His58 threads the bilayer. At Phe59 to Lys78 the chain is on the cytoplasmic side. A helical membrane pass occupies residues Leu79–Leu97. At Lys98–Asn101 the chain is on the lumenal side. A helical transmembrane segment spans residues Ile102 to Gly124. At Lys125–Val132 the chain is on the cytoplasmic side. A helical transmembrane segment spans residues Ala133–Phe153. Asp154 is a topological domain (lumenal). Residues Leu155–Val175 traverse the membrane as a helical segment. Topologically, residues Glu176 to Ser186 are cytoplasmic. A helical transmembrane segment spans residues Ile187–Val207. The Lumenal segment spans residues Thr208–Pro226. The helical transmembrane segment at Phe227–Leu247 threads the bilayer. Residues Cys248–Asn252 are Cytoplasmic-facing. The helical transmembrane segment at Ser253 to Leu275 threads the bilayer. Residues Leu276 to Gly278 lie on the Lumenal side of the membrane. Residues Val279–Tyr301 traverse the membrane as a helical segment. The Cytoplasmic segment spans residues Ala302–Lys323.

It belongs to the TPT transporter family. UGnT (TC 2.A.7.15) subfamily. As to expression, widely expressed with highest expression in roots.

It localises to the golgi apparatus membrane. In terms of biological role, nucleotide-sugar transporter that transports UDP-glucose and UDP-galactose. Plays a role in lateral root and root hair development. In Arabidopsis thaliana (Mouse-ear cress), this protein is UDP-galactose/UDP-glucose transporter 7.